A 548-amino-acid chain; its full sequence is Chaperonin GroEL (548 aa).

Residues 30 to 33, Lys-51, 87 to 91, Gly-415, 479 to 481, and Asp-495 contribute to the ATP site; these read TLGP, DGTTT, and NAA.

The protein belongs to the chaperonin (HSP60) family. In terms of assembly, forms a cylinder of 14 subunits composed of two heptameric rings stacked back-to-back. Interacts with the co-chaperonin GroES.

Its subcellular location is the cytoplasm. The catalysed reaction is ATP + H2O + a folded polypeptide = ADP + phosphate + an unfolded polypeptide.. Together with its co-chaperonin GroES, plays an essential role in assisting protein folding. The GroEL-GroES system forms a nano-cage that allows encapsulation of the non-native substrate proteins and provides a physical environment optimized to promote and accelerate protein folding. This Salmonella arizonae (strain ATCC BAA-731 / CDC346-86 / RSK2980) protein is Chaperonin GroEL.